The sequence spans 244 residues: ATP synthase subunit a (244 aa).

7 consecutive transmembrane segments (helical) span residues 17-37, 74-94, 112-132, 148-168, 171-191, 196-216, and 217-237; these read LSNV…AVLT, PFLA…MLGL, DPAI…YYGV, IPLL…TLGL, YGNI…ATNF, IALG…WQAF, and SLFV…VYIS.

Belongs to the ATPase A chain family. In terms of assembly, F-type ATPases have 2 components, CF(1) - the catalytic core - and CF(0) - the membrane proton channel. CF(1) has five subunits: alpha(3), beta(3), gamma(1), delta(1), epsilon(1). CF(0) has three main subunits: a(1), b(2) and c(9-12). The alpha and beta chains form an alternating ring which encloses part of the gamma chain. CF(1) is attached to CF(0) by a central stalk formed by the gamma and epsilon chains, while a peripheral stalk is formed by the delta and b chains.

The protein resides in the cell membrane. Key component of the proton channel; it plays a direct role in the translocation of protons across the membrane. In Bacillus pumilus (strain SAFR-032), this protein is ATP synthase subunit a.